We begin with the raw amino-acid sequence, 274 residues long: Penicillin-insensitive murein endopeptidase (274 aa).

An N-terminal signal peptide occupies residues 1–19 (MNKTAIALLALLASSASLA). Cystine bridges form between Cys44–Cys265, Cys187–Cys235, and Cys216–Cys223. Residues His110, His113, Asp120, Asp147, His150, and His211 each contribute to the Zn(2+) site. The disordered stretch occupies residues 227–274 (PLPPPGDGCGAELQSWFEPPKPGTTKPEKKTPPPLPPSCQALLDEHVI).

Belongs to the peptidase M74 family. As to quaternary structure, dimer. Zn(2+) serves as cofactor.

It is found in the periplasm. Its function is as follows. Murein endopeptidase that cleaves the D-alanyl-meso-2,6-diamino-pimelyl amide bond that connects peptidoglycan strands. Likely plays a role in the removal of murein from the sacculus. The chain is Penicillin-insensitive murein endopeptidase from Escherichia coli (strain ATCC 8739 / DSM 1576 / NBRC 3972 / NCIMB 8545 / WDCM 00012 / Crooks).